The following is a 193-amino-acid chain: Hypoxanthine/guanine phosphoribosyltransferase (193 aa).

This sequence belongs to the purine/pyrimidine phosphoribosyltransferase family. Archaeal HPRT subfamily. Homodimer.

Its subcellular location is the cytoplasm. The enzyme catalyses IMP + diphosphate = hypoxanthine + 5-phospho-alpha-D-ribose 1-diphosphate. It catalyses the reaction GMP + diphosphate = guanine + 5-phospho-alpha-D-ribose 1-diphosphate. Its pathway is purine metabolism; IMP biosynthesis via salvage pathway; IMP from hypoxanthine: step 1/1. In terms of biological role, catalyzes a salvage reaction resulting in the formation of IMP that is energically less costly than de novo synthesis. The protein is Hypoxanthine/guanine phosphoribosyltransferase of Methanothermobacter thermautotrophicus (strain ATCC 29096 / DSM 1053 / JCM 10044 / NBRC 100330 / Delta H) (Methanobacterium thermoautotrophicum).